Here is a 901-residue protein sequence, read N- to C-terminus: Valine--tRNA ligase (901 aa).

Residues 1–37 (MLPGCYTHRLNMSDTQDPPQDESTTDESADALDGEYD) form a disordered region. A compositionally biased stretch (acidic residues) spans 19-35 (PQDESTTDESADALDGE). The short motif at 72–82 (PTVSGNLHMGH) is the 'HIGH' region element. The 'KMSKS' region motif lies at 572 to 576 (AMSKS). Residue K575 coordinates ATP.

This sequence belongs to the class-I aminoacyl-tRNA synthetase family. ValS type 2 subfamily.

It is found in the cytoplasm. The enzyme catalyses tRNA(Val) + L-valine + ATP = L-valyl-tRNA(Val) + AMP + diphosphate. Its function is as follows. Catalyzes the attachment of valine to tRNA(Val). As ValRS can inadvertently accommodate and process structurally similar amino acids such as threonine, to avoid such errors, it has a 'posttransfer' editing activity that hydrolyzes mischarged Thr-tRNA(Val) in a tRNA-dependent manner. This chain is Valine--tRNA ligase, found in Haloarcula marismortui (strain ATCC 43049 / DSM 3752 / JCM 8966 / VKM B-1809) (Halobacterium marismortui).